A 184-amino-acid chain; its full sequence is ADP-ribosylation factor-like protein 2 (184 aa).

Gly2 carries the N-myristoyl glycine lipid modification. GTP-binding positions include Gly23 to Thr30, Asp66 to Gln70, Gly68, and Asn125 to Asp128.

The protein belongs to the small GTPase superfamily. Arf family.

Its subcellular location is the cytoplasm. The protein resides in the cell membrane. It is found in the cytoskeleton. The protein localises to the microtubule organizing center. It localises to the centrosome. In terms of biological role, GTP-binding protein that functions in embryogenesis, cytokinesis, germline development and microtubulule cytoskeleton dynamics. The protein is ADP-ribosylation factor-like protein 2 (evl-20.1) of Caenorhabditis briggsae.